The primary structure comprises 465 residues: Sensor histidine kinase ZraS (465 aa).

Residues methionine 1–tryptophan 14 lie on the Cytoplasmic side of the membrane. A helical membrane pass occupies residues leucine 15–isoleucine 35. Topologically, residues arginine 36–threonine 201 are periplasmic. A helical transmembrane segment spans residues leucine 202–tyrosine 222. Residues arginine 223 to glycine 465 are Cytoplasmic-facing. The region spanning glycine 251–isoleucine 458 is the Histidine kinase domain. Phosphohistidine; by autocatalysis is present on histidine 254.

Autophosphorylated.

It localises to the cell inner membrane. It carries out the reaction ATP + protein L-histidine = ADP + protein N-phospho-L-histidine.. With respect to regulation, activity of the ZraS/ZraR two-component system is repressed by the zinc-bound form of ZraP, which probably interacts with the periplasmic region of ZraS. In terms of biological role, part of the Zra signaling pathway, an envelope stress response (ESR) system composed of the periplasmic accessory protein ZraP, the histidine kinase ZraS and the transcriptional regulator ZraR. The ZraPSR system contributes to antibiotic resistance and is important for membrane integrity in the presence of membrane-targeting biocides. ZraS is a member of the two-component regulatory system ZraS/ZraR. Functions as a membrane-associated sensor kinase that phosphorylates ZraR in response to high concentrations of Zn(2+) or Pb(2+) in the medium. Binds one zinc molecule with high affinity via its periplasmic domain, inducing a conformational change that is transmitted to the histidine kinase domain and leads to the activation of ZraR. The system has no direct role in zinc or copper resistance. In Escherichia coli (strain K12), this protein is Sensor histidine kinase ZraS.